Reading from the N-terminus, the 192-residue chain is Photosystem I assembly protein Ycf4 (192 aa).

Transmembrane regions (helical) follow at residues 30 to 52 and 72 to 94; these read YFWA…SSYL and IAIG…AIAW.

Belongs to the Ycf4 family.

Its subcellular location is the cellular thylakoid membrane. Functionally, seems to be required for the assembly of the photosystem I complex. The sequence is that of Photosystem I assembly protein Ycf4 from Thermosynechococcus vestitus (strain NIES-2133 / IAM M-273 / BP-1).